The primary structure comprises 380 residues: Epoxyqueuosine reductase (380 aa).

Asp134 (proton donor) is an active-site residue. Residues 178 to 208 form the 4Fe-4S ferredoxin-type 1 domain; that stretch reads FPPDKPIEDQCGGCTKCIDICPTGALIQGGQ. 8 residues coordinate [4Fe-4S] cluster: Cys188, Cys191, Cys194, Cys198, Cys214, Cys240, Cys243, and Cys247. The 4Fe-4S ferredoxin-type 2 domain maps to 226 to 258; sequence PEEYRDKIGNRIYGCDTCQTVCPKNKGMDFHNH.

It belongs to the QueG family. As to quaternary structure, monomer. Cob(II)alamin is required as a cofactor. The cofactor is [4Fe-4S] cluster.

It is found in the cytoplasm. The catalysed reaction is epoxyqueuosine(34) in tRNA + AH2 = queuosine(34) in tRNA + A + H2O. The protein operates within tRNA modification; tRNA-queuosine biosynthesis. In terms of biological role, catalyzes the conversion of epoxyqueuosine (oQ) to queuosine (Q), which is a hypermodified base found in the wobble positions of tRNA(Asp), tRNA(Asn), tRNA(His) and tRNA(Tyr). This is Epoxyqueuosine reductase from Bacillus cereus (strain ATCC 14579 / DSM 31 / CCUG 7414 / JCM 2152 / NBRC 15305 / NCIMB 9373 / NCTC 2599 / NRRL B-3711).